The primary structure comprises 118 residues: Non-specific lipid-transfer protein 3 (118 aa).

The first 25 residues, 1–25, serve as a signal peptide directing secretion; the sequence is MARAAATQLVLVAMVAAMLLVATDA. 4 disulfides stabilise this stretch: cysteine 29-cysteine 77, cysteine 39-cysteine 54, cysteine 55-cysteine 100, and cysteine 75-cysteine 114.

The protein belongs to the plant LTP family.

Functionally, plant non-specific lipid-transfer proteins transfer phospholipids as well as galactolipids across membranes. May play a role in wax or cutin deposition in the cell walls of expanding epidermal cells and certain secretory tissues. The chain is Non-specific lipid-transfer protein 3 (LTP3) from Hordeum vulgare (Barley).